A 1244-amino-acid chain; its full sequence is Membrane-associated phosphatidylinositol transfer protein 1 (1244 aa).

Position 59 is a phosphothreonine (T59). Disordered regions lie at residues K258 to S331 and A339 to S358. At T287 the chain carries Phosphothreonine; by CDK1. Positions A299 to S319 are enriched in low complexity. Phosphoserine occurs at positions 300, 304, 319, 326, 329, 342, 345, 346, and 373. Phosphoserine; by CDK1 is present on S382. The tract at residues A581–S682 is disordered. S593, S600, and S621 each carry phosphoserine. Residues G643–W658 show a composition bias toward polar residues. Residues L686–E880 form the DDHD domain. S896 carries the phosphoserine modification. Positions Q1206–E1244 are disordered. Omega-N-methylarginine occurs at positions 1211 and 1218. S1237 carries the post-translational modification Phosphoserine.

Belongs to the PtdIns transfer protein family. PI transfer class IIA subfamily. In terms of assembly, interacts with PIK4CA. Interacts with PTK2B via its C-terminus. Interacts with RHOA. Has higher affinity for the inactive, GDP-bound form of RHOA. The CDK1-phosphorylated form interacts with PLK1. Interacts with VAPB. In terms of processing, phosphorylated on multiple sites by CDK1 at the onset of mitosis. Phosphorylation facilitates dissociation from the Golgi complex and is required for interaction with PLK1. Phosphorylated on threonine residues upon treatment with oleic acid. Post-translationally, phosphorylated on tyrosine residues by PTK2B. In terms of tissue distribution, ubiquitous.

Its subcellular location is the cytoplasm. It is found in the golgi apparatus. The protein resides in the golgi stack membrane. It localises to the endoplasmic reticulum membrane. The protein localises to the lipid droplet. Its subcellular location is the cleavage furrow. It is found in the midbody. The enzyme catalyses a 1,2-diacyl-sn-glycero-3-phospho-(1D-myo-inositol)(in) = a 1,2-diacyl-sn-glycero-3-phospho-(1D-myo-inositol)(out). Its function is as follows. Catalyzes the transfer of phosphatidylinositol (PI) between membranes. Binds PI, phosphatidylcholine (PC) and phosphatidic acid (PA) with the binding affinity order of PI &gt; PA &gt; PC. Regulates RHOA activity, and plays a role in cytoskeleton remodeling. Necessary for normal completion of cytokinesis. Plays a role in maintaining normal diacylglycerol levels in the Golgi apparatus. Necessary for maintaining the normal structure of the endoplasmic reticulum and the Golgi apparatus. Required for protein export from the endoplasmic reticulum and the Golgi. Binds calcium ions. This Homo sapiens (Human) protein is Membrane-associated phosphatidylinositol transfer protein 1 (PITPNM1).